A 208-amino-acid polypeptide reads, in one-letter code: UPF0637 protein Bcer98_2662 (208 aa).

This sequence belongs to the UPF0637 family.

The protein is UPF0637 protein Bcer98_2662 of Bacillus cytotoxicus (strain DSM 22905 / CIP 110041 / 391-98 / NVH 391-98).